Consider the following 192-residue polypeptide: Ribose 1,5-bisphosphate phosphokinase PhnN (192 aa).

15 to 22 is a binding site for ATP; it reads GPSGAGKD.

This sequence belongs to the ribose 1,5-bisphosphokinase family.

The enzyme catalyses alpha-D-ribose 1,5-bisphosphate + ATP = 5-phospho-alpha-D-ribose 1-diphosphate + ADP. It functions in the pathway metabolic intermediate biosynthesis; 5-phospho-alpha-D-ribose 1-diphosphate biosynthesis; 5-phospho-alpha-D-ribose 1-diphosphate from D-ribose 5-phosphate (route II): step 3/3. In terms of biological role, catalyzes the phosphorylation of ribose 1,5-bisphosphate to 5-phospho-D-ribosyl alpha-1-diphosphate (PRPP). This chain is Ribose 1,5-bisphosphate phosphokinase PhnN, found in Brucella melitensis biotype 2 (strain ATCC 23457).